Reading from the N-terminus, the 130-residue chain is Small ribosomal subunit protein uS9 (130 aa).

Residues 98 to 130 form a disordered region; the sequence is LKRAGLLTRDPRMKERKKPGLKKARRSPQFSKR. Residues 111 to 130 show a composition bias toward basic residues; that stretch reads KERKKPGLKKARRSPQFSKR.

It belongs to the universal ribosomal protein uS9 family.

The sequence is that of Small ribosomal subunit protein uS9 from Staphylococcus haemolyticus (strain JCSC1435).